We begin with the raw amino-acid sequence, 579 residues long: Protein inscuteable homolog (579 aa).

An important for interaction with GPSM2 region spans residues 74-89 (SVQRWMEDLKLMTECE). The short motif at 576–579 (ESFV) is the PDZ-binding element.

As to quaternary structure, interacts with ALS2CR19/PAR3B and F2RL2/PAR3. Interacts with GPSM1/AGS3 and GPSM2/LGN (via TPR repeat region). Identified in a complex with GPSM2 and F2RL2. As to expression, isoform 1 is expressed in various tissues with stronger expression in liver, kidney and small intestine. Isoform 2 is abundantly expressed in small intestine and to a lower extent in lung and pancreas.

The protein localises to the cytoplasm. The protein resides in the cell cortex. May function as an adapter linking the Par3 complex to the GPSM1/GPSM2 complex. Involved in spindle orientation during mitosis. May regulate cell proliferation and differentiation in the developing nervous system. May play a role in the asymmetric division of fibroblasts and participate in the process of stratification of the squamous epithelium. The sequence is that of Protein inscuteable homolog (INSC) from Homo sapiens (Human).